A 212-amino-acid chain; its full sequence is Thiamine-phosphate synthase (212 aa).

Residues 39 to 43 (QLREK) and Asn71 contribute to the 4-amino-2-methyl-5-(diphosphooxymethyl)pyrimidine site. Asp72 and Asp91 together coordinate Mg(2+). Residue Ser110 coordinates 4-amino-2-methyl-5-(diphosphooxymethyl)pyrimidine. 137-139 (TPT) is a 2-[(2R,5Z)-2-carboxy-4-methylthiazol-5(2H)-ylidene]ethyl phosphate binding site. 4-amino-2-methyl-5-(diphosphooxymethyl)pyrimidine is bound at residue Lys140. A 2-[(2R,5Z)-2-carboxy-4-methylthiazol-5(2H)-ylidene]ethyl phosphate-binding site is contributed by Gly168.

It belongs to the thiamine-phosphate synthase family. Mg(2+) serves as cofactor.

It carries out the reaction 2-[(2R,5Z)-2-carboxy-4-methylthiazol-5(2H)-ylidene]ethyl phosphate + 4-amino-2-methyl-5-(diphosphooxymethyl)pyrimidine + 2 H(+) = thiamine phosphate + CO2 + diphosphate. The enzyme catalyses 2-(2-carboxy-4-methylthiazol-5-yl)ethyl phosphate + 4-amino-2-methyl-5-(diphosphooxymethyl)pyrimidine + 2 H(+) = thiamine phosphate + CO2 + diphosphate. It catalyses the reaction 4-methyl-5-(2-phosphooxyethyl)-thiazole + 4-amino-2-methyl-5-(diphosphooxymethyl)pyrimidine + H(+) = thiamine phosphate + diphosphate. Its pathway is cofactor biosynthesis; thiamine diphosphate biosynthesis; thiamine phosphate from 4-amino-2-methyl-5-diphosphomethylpyrimidine and 4-methyl-5-(2-phosphoethyl)-thiazole: step 1/1. In terms of biological role, condenses 4-methyl-5-(beta-hydroxyethyl)thiazole monophosphate (THZ-P) and 2-methyl-4-amino-5-hydroxymethyl pyrimidine pyrophosphate (HMP-PP) to form thiamine monophosphate (TMP). This Acidothermus cellulolyticus (strain ATCC 43068 / DSM 8971 / 11B) protein is Thiamine-phosphate synthase.